Here is a 102-residue protein sequence, read N- to C-terminus: Small ribosomal subunit protein uS10 (102 aa).

This sequence belongs to the universal ribosomal protein uS10 family. In terms of assembly, part of the 30S ribosomal subunit.

In terms of biological role, involved in the binding of tRNA to the ribosomes. The chain is Small ribosomal subunit protein uS10 from Thermosipho africanus (strain TCF52B).